Consider the following 361-residue polypeptide: tRNA/tmRNA (uracil-C(5))-methyltransferase (361 aa).

Residues glutamine 185, tyrosine 213, asparagine 218, glutamate 234, and aspartate 294 each contribute to the S-adenosyl-L-methionine site. The active-site Nucleophile is the cysteine 319. The Proton acceptor role is filled by glutamate 353.

This sequence belongs to the class I-like SAM-binding methyltransferase superfamily. RNA M5U methyltransferase family. TrmA subfamily.

The enzyme catalyses uridine(54) in tRNA + S-adenosyl-L-methionine = 5-methyluridine(54) in tRNA + S-adenosyl-L-homocysteine + H(+). The catalysed reaction is uridine(341) in tmRNA + S-adenosyl-L-methionine = 5-methyluridine(341) in tmRNA + S-adenosyl-L-homocysteine + H(+). Its function is as follows. Dual-specificity methyltransferase that catalyzes the formation of 5-methyluridine at position 54 (m5U54) in all tRNAs, and that of position 341 (m5U341) in tmRNA (transfer-mRNA). In Pseudomonas putida (strain ATCC 47054 / DSM 6125 / CFBP 8728 / NCIMB 11950 / KT2440), this protein is tRNA/tmRNA (uracil-C(5))-methyltransferase.